We begin with the raw amino-acid sequence, 929 residues long: Dual serine/threonine and tyrosine protein kinase (929 aa).

Over residues 1–14 the composition is skewed to low complexity; it reads MEGDGVPWGSEPVS. Positions 1–21 are disordered; sequence MEGDGVPWGSEPVSGPGPGGG. 2 coiled-coil regions span residues 189-215 and 395-431; these read EEDLEVQENNEDAAHVLAELEVTMHHA and RKKENELYESLMNIANRKQEEMKDMIVETLNTMKEEL. Residues 652–906 enclose the Protein kinase domain; the sequence is PKLGQELGRG…PLLGIVQPML (255 aa). ATP-binding positions include 658–666 and K681; that span reads LGRGQYGVV. D777 functions as the Proton acceptor in the catalytic mechanism.

This sequence belongs to the protein kinase superfamily. Ser/Thr protein kinase family. Predominantly expressed in skeletal muscle and testis. Expressed in basolateral and apical membranes of all tubular epithelia. Expressed in thin ascending limb of the loop of Henle and the distal convoluted tubule. Expressed in all layers of transitional ureteric epithelium and in the ureteric smooth-muscle cells. Weakly expressed in heart, brain, placenta, kidney, pancreas, spleen, thymus, prostate, uterus, small intestine, white blood cells, stomach, spinal cord and adrenal gland. Is widely distributed in the CNS. Also detected in several tumor cell lines. Expressed in the skin.

The protein resides in the cytoplasm. The protein localises to the cell membrane. It localises to the apical cell membrane. It is found in the basolateral cell membrane. Its subcellular location is the cell junction. The enzyme catalyses L-seryl-[protein] + ATP = O-phospho-L-seryl-[protein] + ADP + H(+). It carries out the reaction L-threonyl-[protein] + ATP = O-phospho-L-threonyl-[protein] + ADP + H(+). It catalyses the reaction L-tyrosyl-[protein] + ATP = O-phospho-L-tyrosyl-[protein] + ADP + H(+). Its function is as follows. Acts as a positive regulator of ERK phosphorylation downstream of fibroblast growth factor-receptor activation. Involved in the regulation of both caspase-dependent apoptosis and caspase-independent cell death. In the skin, it plays a predominant role in suppressing caspase-dependent apoptosis in response to UV stress in a range of dermal cell types. This chain is Dual serine/threonine and tyrosine protein kinase (DSTYK), found in Homo sapiens (Human).